Reading from the N-terminus, the 480-residue chain is Glutathione reductase (480 aa).

Residues serine 31 and glycine 32 each contribute to the FAD site. Residue serine 31 participates in glutathione binding. Arginine 38 provides a ligand contact to glutathione. The FAD site is built by glutamate 51, threonine 58, cysteine 59, and lysine 67. The cysteines at positions 59 and 64 are disulfide-linked. Tyrosine 121 lines the glutathione pocket. Residue alanine 137 coordinates FAD. 4 residues coordinate NADP(+): isoleucine 206, glutamate 209, arginine 226, and glycine 291. Aspartate 331 contacts FAD. Residue glutamate 337 participates in NADP(+) binding. Residue threonine 339 coordinates FAD. Residue arginine 347 participates in glutathione binding. An NADP(+)-binding site is contributed by valine 372. Residue lysine 422 coordinates glutathione. Residue histidine 469 participates in FAD binding. The Proton acceptor role is filled by histidine 469.

Belongs to the class-I pyridine nucleotide-disulfide oxidoreductase family. Homodimer. The cofactor is FAD.

Its subcellular location is the cytoplasm. The protein localises to the mitochondrion. The catalysed reaction is 2 glutathione + NADP(+) = glutathione disulfide + NADPH + H(+). Functionally, catalyzes the reduction of glutathione disulfide (GSSG) to reduced glutathione (GSH). Constitutes the major mechanism to maintain a high GSH:GSSG ratio in the cytosol. This is Glutathione reductase (GLR1) from Eremothecium gossypii (strain ATCC 10895 / CBS 109.51 / FGSC 9923 / NRRL Y-1056) (Yeast).